The sequence spans 425 residues: Polyribonucleotide 5'-hydroxyl-kinase Clp1 (425 aa).

Residues E22, K62, and 124-129 each bind ATP; that span reads DVGKST.

This sequence belongs to the Clp1 family. Clp1 subfamily. As to quaternary structure, component of the tRNA splicing endonuclease complex, composed of CLP1, TSEN2, TSEN15, TSEN34 and TSEN54. Component of pre-mRNA cleavage complex II (CF-II). Also associates with numerous components of the pre-mRNA cleavage complex I (CF-I/CFIm), including NUDT21, CPSF2, CPSF3, CPSF6 and CPSF7. Interacts with CSTF2 and SYMPK. Mg(2+) is required as a cofactor. The cofactor is Mn(2+). Requires Ni(2+) as cofactor.

Its subcellular location is the nucleus. It carries out the reaction a 5'-end dephospho-2'-deoxyribonucleoside-DNA + ATP = a 5'-end 5'-phospho-2'-deoxyribonucleoside-DNA + ADP + H(+). It catalyses the reaction a 5'-end dephospho-ribonucleoside-RNA + ATP = a 5'-end 5'-phospho-ribonucleoside-RNA + ADP + H(+). Functionally, polynucleotide kinase that can phosphorylate the 5'-hydroxyl groups of double-stranded RNA (dsRNA), single-stranded RNA (ssRNA), double-stranded DNA (dsDNA) and double-stranded DNA:RNA hybrids. dsRNA is phosphorylated more efficiently than dsDNA, and the RNA component of a DNA:RNA hybrid is phosphorylated more efficiently than the DNA component. Plays a key role in both tRNA splicing and mRNA 3'-end formation. Component of the tRNA splicing endonuclease complex: phosphorylates the 5'-terminus of the tRNA 3'-exon during tRNA splicing; this phosphorylation event is a prerequisite for the subsequent ligation of the two exon halves and the production of a mature tRNA. Its role in tRNA splicing and maturation is required for cerebellar development. Component of the pre-mRNA cleavage complex II (CF-II), which seems to be required for mRNA 3'-end formation. Also phosphorylates the 5'-terminus of exogenously introduced short interfering RNAs (siRNAs), which is a necessary prerequisite for their incorporation into the RNA-induced silencing complex (RISC). However, endogenous siRNAs and microRNAs (miRNAs) that are produced by the cleavage of dsRNA precursors by DICER1 already contain a 5'-phosphate group, so this protein may be dispensible for normal RNA-mediated gene silencing. The sequence is that of Polyribonucleotide 5'-hydroxyl-kinase Clp1 from Homo sapiens (Human).